The following is a 137-amino-acid chain: Phosphoribosyl-AMP cyclohydrolase (137 aa).

Asp83 is a Mg(2+) binding site. Position 84 (Cys84) interacts with Zn(2+). Mg(2+) contacts are provided by Asp85 and Asp87. Zn(2+)-binding residues include Cys101 and Cys108.

It belongs to the PRA-CH family. In terms of assembly, homodimer. It depends on Mg(2+) as a cofactor. Zn(2+) serves as cofactor.

The protein resides in the cytoplasm. The enzyme catalyses 1-(5-phospho-beta-D-ribosyl)-5'-AMP + H2O = 1-(5-phospho-beta-D-ribosyl)-5-[(5-phospho-beta-D-ribosylamino)methylideneamino]imidazole-4-carboxamide. It participates in amino-acid biosynthesis; L-histidine biosynthesis; L-histidine from 5-phospho-alpha-D-ribose 1-diphosphate: step 3/9. Catalyzes the hydrolysis of the adenine ring of phosphoribosyl-AMP. The chain is Phosphoribosyl-AMP cyclohydrolase from Burkholderia mallei (strain ATCC 23344).